The sequence spans 443 residues: Porin D (443 aa).

A signal peptide spans 1-23 (MKVMKWSAIALAVSAGSTQFAVA). Catalysis depends on residues His179, Asp231, and Ser319.

This sequence belongs to the outer membrane porin (Opr) (TC 1.B.25) family.

The protein localises to the cell outer membrane. Functionally, porin with a specificity for basic amino acids. Involved in facilitated diffusion of carbapenem beta-lactam antibiotics, such as imipenem and meropenem. Also possesses serine protease activity. The protein is Porin D (oprD) of Pseudomonas aeruginosa (strain ATCC 15692 / DSM 22644 / CIP 104116 / JCM 14847 / LMG 12228 / 1C / PRS 101 / PAO1).